The following is a 299-amino-acid chain: Protein sprouty homolog 4 (299 aa).

The residue at position 1 (methionine 1) is an N-acetylmethionine. Disordered regions lie at residues 50–79 (NDYI…PTPA) and 92–127 (FSGR…ASPR). Residues 92 to 107 (FSGRPSSVSSSSSTSS) are compositionally biased toward low complexity. Position 125 is a phosphoserine (serine 125). Residues 166-273 (KCKECASPRT…GYDRLRRPGC (108 aa)) enclose the SPR domain.

Belongs to the sprouty family. In terms of assembly, interacts (via C-terminus) with TESK1 (via both C- and N-termini); the interaction inhibits TESK1 kinase activity. Interacts with RAF1. Interacts with CAV1 (via C-terminus).

The protein resides in the cytoplasm. It is found in the cell projection. The protein localises to the ruffle membrane. In terms of biological role, suppresses the insulin receptor and EGFR-transduced MAPK signaling pathway, but does not inhibit MAPK activation by a constitutively active mutant Ras. Probably impairs the formation of GTP-Ras. Inhibits Ras-independent, but not Ras-dependent, activation of RAF1. Represses integrin-mediated cell spreading via inhibition of TESK1-mediated phosphorylation of cofilin. This is Protein sprouty homolog 4 (SPRY4) from Bos taurus (Bovine).